We begin with the raw amino-acid sequence, 88 residues long: Cytochrome c oxidase subunit 6B2 (88 aa).

Residues Met-1–Arg-22 are disordered. A CHCH domain is found at Ile-29–Trp-75. The Cx9C motif signature appears at Cys-32–Cys-42. 2 disulfides stabilise this stretch: Cys-32–Cys-67 and Cys-42–Cys-56. The Cx10C motif signature appears at Cys-56 to Cys-67.

Belongs to the cytochrome c oxidase subunit 6B family. In terms of assembly, component of the cytochrome c oxidase (complex IV, CIV), a multisubunit enzyme composed of 14 subunits. The complex is composed of a catalytic core of 3 subunits MT-CO1, MT-CO2 and MT-CO3, encoded in the mitochondrial DNA, and 11 supernumerary subunits COX4I1 (or COX4I2), COX5A, COX5B, COX6A1 (or COX6A2), COX6B1 (or COX6B2), COX6C, COX7A2 (or COX7A1), COX7B, COX7C, COX8A and NDUFA4, which are encoded in the nuclear genome. The complex exists as a monomer or a dimer and forms supercomplexes (SCs) in the inner mitochondrial membrane with NADH-ubiquinone oxidoreductase (complex I, CI) and ubiquinol-cytochrome c oxidoreductase (cytochrome b-c1 complex, complex III, CIII), resulting in different assemblies (supercomplex SCI(1)III(2)IV(1) and megacomplex MCI(2)III(2)IV(2)). Testis specific. Weak expression in thymus and heart. Expressed in cancer cell lines.

It localises to the mitochondrion inner membrane. It functions in the pathway energy metabolism; oxidative phosphorylation. Component of the cytochrome c oxidase, the last enzyme in the mitochondrial electron transport chain which drives oxidative phosphorylation. The respiratory chain contains 3 multisubunit complexes succinate dehydrogenase (complex II, CII), ubiquinol-cytochrome c oxidoreductase (cytochrome b-c1 complex, complex III, CIII) and cytochrome c oxidase (complex IV, CIV), that cooperate to transfer electrons derived from NADH and succinate to molecular oxygen, creating an electrochemical gradient over the inner membrane that drives transmembrane transport and the ATP synthase. Cytochrome c oxidase is the component of the respiratory chain that catalyzes the reduction of oxygen to water. Electrons originating from reduced cytochrome c in the intermembrane space (IMS) are transferred via the dinuclear copper A center (CU(A)) of subunit 2 and heme A of subunit 1 to the active site in subunit 1, a binuclear center (BNC) formed by heme A3 and copper B (CU(B)). The BNC reduces molecular oxygen to 2 water molecules using 4 electrons from cytochrome c in the IMS and 4 protons from the mitochondrial matrix. This Homo sapiens (Human) protein is Cytochrome c oxidase subunit 6B2 (COX6B2).